Consider the following 176-residue polypeptide: Ribosome rescue factor SmrB (176 aa).

The 76-residue stretch at 97 to 172 (LDMHGMTQQE…GDGALLVLLS (76 aa)) folds into the Smr domain.

Belongs to the SmrB family. In terms of assembly, associates with collided ribosomes, but not with correctly translating polysomes.

Functionally, acts as a ribosome collision sensor. Detects stalled/collided disomes (pairs of ribosomes where the leading ribosome is stalled and a second ribosome has collided with it) and endonucleolytically cleaves mRNA at the 5' boundary of the stalled ribosome. Stalled/collided disomes form a new interface (primarily via the 30S subunits) that binds SmrB. Cleaved mRNA becomes available for tmRNA ligation, leading to ribosomal subunit dissociation and rescue of stalled ribosomes. This Vibrio campbellii (strain ATCC BAA-1116) protein is Ribosome rescue factor SmrB.